The chain runs to 87 residues: Putative protein KleG (87 aa).

Disordered regions lie at residues 1–23 and 61–87; these read MRHS…WPSS and IPTT…IFSR. Residues 68 to 78 are compositionally biased toward basic residues; the sequence is RGRRPQRHRPS.

The chain is Putative protein KleG (kleG) from Escherichia coli.